The sequence spans 426 residues: Dihydroorotase (426 aa).

Positions 62 and 64 each coordinate Zn(2+). Substrate contacts are provided by residues 64 to 66 and N96; that span reads HLR. D154, H181, and H234 together coordinate Zn(2+). N280 lines the substrate pocket. Position 307 (D307) interacts with Zn(2+). D307 is an active-site residue. Residues H311 and 325–326 each bind substrate; that span reads FG.

This sequence belongs to the metallo-dependent hydrolases superfamily. DHOase family. Class I DHOase subfamily. The cofactor is Zn(2+).

It carries out the reaction (S)-dihydroorotate + H2O = N-carbamoyl-L-aspartate + H(+). It participates in pyrimidine metabolism; UMP biosynthesis via de novo pathway; (S)-dihydroorotate from bicarbonate: step 3/3. Its function is as follows. Catalyzes the reversible cyclization of carbamoyl aspartate to dihydroorotate. This is Dihydroorotase from Desulforapulum autotrophicum (strain ATCC 43914 / DSM 3382 / VKM B-1955 / HRM2) (Desulfobacterium autotrophicum).